A 319-amino-acid chain; its full sequence is MNNTKKRGVLLVNLGTPEEATAPAVKRFLSQFLHDQRVVDMTRWLWCPILHGIILPIRSPKVAKLYQTVWMKEGSPLMVYSKRQQVELQAKLNCPVEIGMTYGTPSVLDGVNKLQAQGVDEICVLPLYPQYSGTTTGAAYDALAHALRKVAVVPSIQFIRDYHDHPLYIKALAESVRQSWQAQGKGDYLLCSYHGIPQRYADNGDIYPLHCEMTTELLRLELGLDKSQIGTTYQSRFGREEWLQPYTDKTLESLPAKGIKSLDVITPAFSVDCLETLEEISEQGQESFLHAGGEQYRFIPCLNDAPSHIEMMARLVTER.

The Fe cation site is built by H194 and E275.

The protein belongs to the ferrochelatase family.

The protein localises to the cytoplasm. The catalysed reaction is heme b + 2 H(+) = protoporphyrin IX + Fe(2+). Its pathway is porphyrin-containing compound metabolism; protoheme biosynthesis; protoheme from protoporphyrin-IX: step 1/1. Catalyzes the ferrous insertion into protoporphyrin IX. The protein is Ferrochelatase of Vibrio vulnificus (strain YJ016).